The following is a 1809-amino-acid chain: Stereocilin (1809 aa).

A signal peptide spans 1–22; the sequence is MALSLQPQLLLLLSLLPQEVTS. N-linked (GlcNAc...) asparagine glycans are attached at residues N63, N200, N295, N352, and N364. Residues 376–426 are disordered; the sequence is PATPRPPPTTPRPPPTTPQPPPTTTQPIPDTTQPPPVTPRPPPTTPQPPPS. Pro residues-rich tracts occupy residues 378–399 and 407–426; these read TPRPPPTTPRPPPTTPQPPPTT and TQPPPVTPRPPPTTPQPPPS. 10 N-linked (GlcNAc...) asparagine glycosylation sites follow: N467, N516, N580, N605, N696, N860, N952, N1000, N1213, and N1308.

It belongs to the stereocilin family. As to expression, strongly expressed in the inner ear, detected in the testis, and barely detected in the eye. Detected in the six sensory areas of the inner ear by immunofluorescence. Expressed only in the sensory hair cells and associated with the stereocilia, the stiff microvilli forming the structure for mechanoreception of sound stimulation.

It localises to the cell surface. Its subcellular location is the cell projection. It is found in the kinocilium. The protein resides in the stereocilium. In terms of biological role, essential to the formation of horizontal top connectors between outer hair cell stereocilia. This is Stereocilin (Strc) from Mus musculus (Mouse).